We begin with the raw amino-acid sequence, 613 residues long: Ectonucleoside triphosphate diphosphohydrolase 4 (613 aa).

Topologically, residues 1-33 (MGRIGISCLFPASWHFSISPVGCPRILNTNLRQ) are cytoplasmic. The helical transmembrane segment at 34-54 (IVVISILAAAVSLLYFSVVII) threads the bilayer. Residues 55-559 (RSKYGWLSKD…AGHAHWRGVS (505 aa)) are Lumenal-facing. Glutamate 222 acts as the Proton acceptor in catalysis. Residues cysteine 368 and cysteine 395 are joined by a disulfide bond. N-linked (GlcNAc...) asparagine glycosylation is found at asparagine 404 and asparagine 407. Residues cysteine 461 and cysteine 490 are joined by a disulfide bond. Residues 560–580 (FVYNHYLFSGCFLVVLLSILL) traverse the membrane as a helical segment. The Cytoplasmic segment spans residues 581–613 (YLLRLRRIHRRAPRTGSLWMEEGLPSQKGPGPL).

Belongs to the GDA1/CD39 NTPase family. The cofactor is Ca(2+). Mg(2+) serves as cofactor. As to expression, ubiquitous.

The protein resides in the cytoplasmic vesicle. It localises to the autophagosome membrane. Its subcellular location is the lysosome membrane. It is found in the golgi apparatus membrane. It catalyses the reaction a ribonucleoside 5'-triphosphate + H2O = a ribonucleoside 5'-diphosphate + phosphate + H(+). The catalysed reaction is a ribonucleoside 5'-diphosphate + H2O = a ribonucleoside 5'-phosphate + phosphate + H(+). The enzyme catalyses UDP + H2O = UMP + phosphate + H(+). It carries out the reaction UTP + H2O = UDP + phosphate + H(+). It catalyses the reaction CTP + H2O = CDP + phosphate + H(+). The catalysed reaction is GDP + H2O = GMP + phosphate + H(+). The enzyme catalyses 5-methyl-UTP + H2O = 5-methyl-UDP + phosphate + H(+). Catalyzes the hydrolysis of nucleoside triphosphates and diphosphates in a calcium- or magnesium-dependent manner, with a preference for pyrimidines. Preferentially hydrolyzes UTP and TTP on UTP and TTP. AMP, ADP, ATP and UMP are not substrates. Preferentially activated by Ca(2+) over Mg(2+). In terms of biological role, has a broad substrate specificity with the ability of cleaving all nucleotide di- and triphosphates with the exception of adenosine di- and triphosphate (ADP and ATP). Preferentially hydrolyzes CTP, UDP, CDP, GTP and GDP. Can use either Ca(2+) or Mg(2+) equally. The polypeptide is Ectonucleoside triphosphate diphosphohydrolase 4 (Entpd4) (Mus musculus (Mouse)).